The primary structure comprises 634 residues: Kelch-like protein 22 (634 aa).

The residue at position 2 (Ala2) is an N-acetylalanine. The region spanning 50–117 (FDVVLVVEGR…IYTSELELSL (68 aa)) is the BTB domain. 6 Kelch repeats span residues 299–349 (CVVG…VLNN), 350–399 (FVYL…VVGR), 400–446 (YIYA…TLEG), 448–493 (MYVT…TLLD), 494–544 (KLYV…VLDT), and 545–593 (RIYV…VLTL). Thr463 carries the post-translational modification Phosphothreonine. A Phosphotyrosine modification is found at Tyr466. Residues 600 to 634 (EPPRGTPDRSQADPDFASEVMSVSDWEEFDNSSED) form a disordered region. Thr605 carries the phosphothreonine modification. The segment covering 624 to 634 (DWEEFDNSSED) has biased composition (acidic residues).

In terms of assembly, component of the BCR(KLHL22) E3 ubiquitin ligase complex, at least composed of CUL3, KLHL22 and RBX1. Interacts with PLK1. Interacts with DEPDC5 (via DEP domain); the interaction depends on amino acid availability. Interacts with YWHAE; required for the nuclear localization of KLHL22 upon amino acid starvation.

The protein resides in the cytoplasm. The protein localises to the cytosol. It localises to the cytoskeleton. It is found in the microtubule organizing center. Its subcellular location is the centrosome. The protein resides in the spindle. The protein localises to the nucleus. It localises to the lysosome. It functions in the pathway protein modification; protein ubiquitination. Its function is as follows. Substrate-specific adapter of a BCR (BTB-CUL3-RBX1) E3 ubiquitin ligase complex required for chromosome alignment and localization of PLK1 at kinetochores. The BCR(KLHL22) ubiquitin ligase complex mediates monoubiquitination of PLK1, leading to PLK1 dissociation from phosphoreceptor proteins and subsequent removal from kinetochores, allowing silencing of the spindle assembly checkpoint (SAC) and chromosome segregation. Monoubiquitination of PLK1 does not lead to PLK1 degradation. The BCR(KLHL22) ubiquitin ligase complex is also responsible for the amino acid-stimulated 'Lys-48' polyubiquitination and proteasomal degradation of DEPDC5. Through the degradation of DEPDC5, releases the GATOR1 complex-mediated inhibition of the TORC1 pathway. It is therefore an amino acid-dependent activator within the amino acid-sensing branch of the TORC1 pathway, indirectly regulating different cellular processes including cell growth and autophagy. This chain is Kelch-like protein 22 (KLHL22), found in Ailuropoda melanoleuca (Giant panda).